A 395-amino-acid chain; its full sequence is MLGWSRLTFILLSGIVTCLVAQQVPPWTEDCRKSTYPPSGPTYRGPVPWYTINLDLPPYKRWHELMVVKAPALKVIVNSMKNIVNAFVPSGKIIHLVDQKLPGLLGNFPGPFEEEMKGIAAVTEIPLGEIILFNIFYEFFTICTSIITEDKEGHLLHGRNLDFGVFLGWNINNDTWVITEELKPLTVNLDFQRNNKTLFKATTFAGYVGMLTGFKPGLFSVTLNERFSIDGGFMGVMEWILGKKDAQWVGFIIRSVLENSTSYEETKNILTKTKILAPAYFILGGNQSGEGCVITRDRKQSLDIYELDPKHGRWYVVQTNYDRWKNPFFLDDRRTPAKMCLNQTTQENISFATIYDVLSTKPILNKLTVYTVLIDVTKGQFETYLRDCPDPCIGW.

The first 20 residues, 1–20 (MLGWSRLTFILLSGIVTCLV), serve as a signal peptide directing secretion. Cysteine 31 and cysteine 340 are joined by a disulfide. Cysteine 143 acts as the Nucleophile in catalysis. Asparagine 195, asparagine 259, asparagine 286, and asparagine 342 each carry an N-linked (GlcNAc...) asparagine glycan. An intrachain disulfide couples cysteine 388 to cysteine 392.

The protein belongs to the acid ceramidase family. As to quaternary structure, heterodimer; disulfide-linked. The heterodimer is composed of the disulfide-linked alpha and beta chains produced by autocatalytic cleavage of the precursor. In terms of processing, N-glycosylated. Post-translationally, proteolytically cleaved into two chains alpha and beta that remain associated via a disulfide bond. Cleavage gives rise to a conformation change that activates the enzyme. The same catalytic Cys residue mediates the autoproteolytic cleavage and subsequent hydrolysis of lipid substrates. The beta chain may undergo an additional C-terminal processing.

Its subcellular location is the lysosome. The protein resides in the secreted. It catalyses the reaction an N-acylsphing-4-enine + H2O = sphing-4-enine + a fatty acid. The enzyme catalyses N-dodecanoylsphing-4-enine + H2O = dodecanoate + sphing-4-enine. The catalysed reaction is N-tetradecanoylsphing-4-enine + H2O = tetradecanoate + sphing-4-enine. It carries out the reaction N-hexadecanoylsphing-4-enine + H2O = sphing-4-enine + hexadecanoate. It catalyses the reaction N-octadecanoylsphing-4-enine + H2O = sphing-4-enine + octadecanoate. The enzyme catalyses N-dodecanoyl-(4R)-hydroxysphinganine + H2O = (4R)-hydroxysphinganine + dodecanoate. The catalysed reaction is N-(dodecanoyl)-sphinganine + H2O = dodecanoate + sphinganine. It carries out the reaction N-(acetyl)-sphing-4-enine + H2O = sphing-4-enine + acetate. It catalyses the reaction N-(hexanoyl)sphing-4-enine + H2O = hexanoate + sphing-4-enine. The enzyme catalyses N-octanoylsphing-4-enine + H2O = octanoate + sphing-4-enine. The catalysed reaction is N-(9Z-octadecenoyl)-sphing-4-enine + H2O = sphing-4-enine + (9Z)-octadecenoate. It carries out the reaction N-dodecanoylethanolamine + H2O = dodecanoate + ethanolamine. It functions in the pathway lipid metabolism; sphingolipid metabolism. Functionally, lysosomal ceramidase that hydrolyzes sphingolipid ceramides into sphingosine and free fatty acids at acidic pH. Ceramides, sphingosine, and its phosphorylated form sphingosine-1-phosphate are bioactive lipids that mediate cellular signaling pathways regulating several biological processes including cell proliferation, apoptosis and differentiation. Has a higher catalytic efficiency towards C12-ceramides versus other ceramides. Also catalyzes the reverse reaction allowing the synthesis of ceramides from fatty acids and sphingosine. For the reverse synthetic reaction, the natural sphingosine D-erythro isomer is more efficiently utilized as a substrate compared to D-erythro-dihydrosphingosine and D-erythro-phytosphingosine, while the fatty acids with chain lengths of 12 or 14 carbons are the most efficiently used. Also has an N-acylethanolamine hydrolase activity. By regulating the levels of ceramides, sphingosine and sphingosine-1-phosphate in the epidermis, mediates the calcium-induced differentiation of epidermal keratinocytes. Also indirectly regulates tumor necrosis factor/TNF-induced apoptosis. By regulating the intracellular balance between ceramides and sphingosine, in adrenocortical cells, probably also acts as a regulator of steroidogenesis. In Bos taurus (Bovine), this protein is Acid ceramidase.